Here is a 751-residue protein sequence, read N- to C-terminus: Catalase-peroxidase 2 (751 aa).

The first 27 residues, 1–27, serve as a signal peptide directing secretion; the sequence is MFKKTVPLLSAVAIAISFSAGTGVANA. Positions 115 to 238 form a cross-link, tryptophyl-tyrosyl-methioninium (Trp-Tyr) (with M-264); the sequence is WHGAGTYRVQ…LAAVQMGLIY (124 aa). His-116 serves as the catalytic Proton acceptor. The tryptophyl-tyrosyl-methioninium (Tyr-Met) (with W-115) cross-link spans 238 to 264; the sequence is YVNPEGPNGKPDPLLAAKDIRDTFGRM. His-279 contributes to the heme b binding site.

The protein belongs to the peroxidase family. Peroxidase/catalase subfamily. As to quaternary structure, homodimer or homotetramer. Requires heme b as cofactor. Formation of the three residue Trp-Tyr-Met cross-link is important for the catalase, but not the peroxidase activity of the enzyme.

It catalyses the reaction H2O2 + AH2 = A + 2 H2O. The enzyme catalyses 2 H2O2 = O2 + 2 H2O. Bifunctional enzyme with both catalase and broad-spectrum peroxidase activity. The sequence is that of Catalase-peroxidase 2 from Idiomarina loihiensis (strain ATCC BAA-735 / DSM 15497 / L2-TR).